We begin with the raw amino-acid sequence, 202 residues long: Snake venom metalloproteinase TM-1 (202 aa).

Glutamine 1 carries the pyrrolidone carboxylic acid modification. Residues arginine 7 to proline 202 enclose the Peptidase M12B domain. 3 disulfides stabilise this stretch: cysteine 118–cysteine 197, cysteine 159–cysteine 181, and cysteine 161–cysteine 164. A Zn(2+)-binding site is contributed by histidine 143. Residue glutamate 144 is part of the active site. Residues histidine 147 and histidine 153 each coordinate Zn(2+).

Belongs to the venom metalloproteinase (M12B) family. P-I subfamily. As to quaternary structure, monomer. It depends on Zn(2+) as a cofactor. Post-translationally, the N-terminus is blocked. In terms of processing, not glycosylated. In terms of tissue distribution, expressed by the venom gland.

It localises to the secreted. With respect to regulation, inhibited by EDTA and 1,10-phenanthroline. Is also inhibited by endogenous tripeptide inhibitors pyroGlu-Asn-Trp, pyroGlu-Gln-Trp, and pyroGlu-Lys-Trp. Its function is as follows. Potent fibrinogenolytic protease which cleaves mainly the Aalpha (FGA) and Bbeta (FGB) chains of fibrinogen and slightly the gamma chain (FGG). Shows preference for substrates having a moderate-size and hydrophobic residue at the P1' position. Preferentially cleaves Ala-|-Leu and Tyr-|-Leu bonds. Is more susceptible to tripeptide inhibitors than TM-3 (AC O57413). In Protobothrops mucrosquamatus (Taiwan habu), this protein is Snake venom metalloproteinase TM-1.